Consider the following 175-residue polypeptide: ATP synthase subunit d, mitochondrial (175 aa).

S2 carries the N-acetylserine modification.

It belongs to the ATPase d subunit family.

The protein localises to the mitochondrion inner membrane. Its function is as follows. Mitochondrial membrane ATP synthase (F(1)F(0) ATP synthase or Complex V) produces ATP from ADP in the presence of a proton gradient across the membrane which is generated by electron transport complexes of the respiratory chain. F-type ATPases consist of two structural domains, F(1) - containing the extramembraneous catalytic core, and F(0) - containing the membrane proton channel, linked together by a central stalk and a peripheral stalk. During catalysis, ATP synthesis in the catalytic domain of F(1) is coupled via a rotary mechanism of the central stalk subunits to proton translocation. Part of the complex F(0) domain and the peripheric stalk, which acts as a stator to hold the catalytic alpha(3)beta(3) subcomplex and subunit a/ATP6 static relative to the rotary elements. In Schizosaccharomyces pombe (strain 972 / ATCC 24843) (Fission yeast), this protein is ATP synthase subunit d, mitochondrial (atp7).